The following is a 450-amino-acid chain: Glucose-6-phosphate isomerase (450 aa).

Residue Glu-290 is the Proton donor of the active site. Active-site residues include His-311 and Lys-425.

It belongs to the GPI family.

Its subcellular location is the cytoplasm. It catalyses the reaction alpha-D-glucose 6-phosphate = beta-D-fructose 6-phosphate. The protein operates within carbohydrate biosynthesis; gluconeogenesis. It participates in carbohydrate degradation; glycolysis; D-glyceraldehyde 3-phosphate and glycerone phosphate from D-glucose: step 2/4. Its function is as follows. Catalyzes the reversible isomerization of glucose-6-phosphate to fructose-6-phosphate. The polypeptide is Glucose-6-phosphate isomerase (Lactiplantibacillus plantarum (strain ATCC BAA-793 / NCIMB 8826 / WCFS1) (Lactobacillus plantarum)).